Reading from the N-terminus, the 537-residue chain is Organic anion transporter 3 (537 aa).

Topologically, residues 1 to 11 (MTFSEILDRVG) are cytoplasmic. The residue at position 4 (serine 4) is a Phosphoserine. A helical transmembrane segment spans residues 12–32 (SMGPFQYLHVTLLALPILGIA). Residues 33–123 (NHNLLQIFTA…LVCGSNKLKE (91 aa)) are Extracellular-facing. Asparagine 81 carries an N-linked (GlcNAc...) asparagine glycan. A helical membrane pass occupies residues 124–144 (MAQSVFMAGILVGGPVFGELS). Topologically, residues 145–150 (DRFGRK) are cytoplasmic. Residues 151-171 (PILTWSYLLLAASGSSAAFSP) traverse the membrane as a helical segment. Residues 172-176 (SLTVY) are Extracellular-facing. Residues 177–197 (MIFRFLCGCSISGISLSTIIL) traverse the membrane as a helical segment. Topologically, residues 198-212 (NVEWVPTSTRAISST) are cytoplasmic. The chain crosses the membrane as a helical span at residues 213 to 233 (TIGYCYTIGQFILPGLAYAVP). Over 234 to 236 (QWR) the chain is Extracellular. Residues 237 to 257 (WLQLSVSAAFFIFSLLSWWVP) form a helical membrane-spanning segment. Over 258–327 (ESIRWLVLSG…FRVSILRRVT (70 aa)) the chain is Cytoplasmic. The chain crosses the membrane as a helical span at residues 328-348 (FCLSLAWFATGFAYYSLAMGV). The Extracellular portion of the chain corresponds to 349 to 354 (EEFGVN). Residues 355–375 (IYILQIIFGGVDIPAKFITIL) traverse the membrane as a helical segment. The Cytoplasmic segment spans residues 376 to 383 (SISYLGRR). Residues 384–404 (ITQGFLLILAGVAILALIFVS) form a helical membrane-spanning segment. Residues 405 to 411 (SEMQLLR) are Extracellular-facing. A helical transmembrane segment spans residues 412–432 (TALAVFGKGCLSGSFSCLFLY). Residues 433-471 (TSELYPTVLRQTGMGISNIWARVGSMIAPLVKITGELQP) are Cytoplasmic-facing. A helical transmembrane segment spans residues 472–492 (FIPNVIFGTMTLLGGSAAFFL). The Extracellular portion of the chain corresponds to 493-537 (LETLNRPLPETIEDIQDWYQQTKKTKQEPEAEKASQTIPLKTGGP). The segment at 513 to 537 (QTKKTKQEPEAEKASQTIPLKTGGP) is disordered.

Belongs to the major facilitator (TC 2.A.1) superfamily. Organic cation transporter (TC 2.A.1.19) family. As to expression, expressed mainly in kidney. In kidney, detected in almost all parts of the nephron, including macula densa cells. Expressed (at protein level) throughout the renal cortex. Widely distributed in the brain with no large regional differences. Expressed in the choroid plexus (CP, located in the ventricles of the brain). Expressed in developing bone. Weakly expressed in brain and eye.

The protein localises to the basolateral cell membrane. It catalyses the reaction estrone 3-sulfate(out) + glutarate(in) = estrone 3-sulfate(in) + glutarate(out). It carries out the reaction estrone 3-sulfate(in) + 2-oxoglutarate(out) = estrone 3-sulfate(out) + 2-oxoglutarate(in). The enzyme catalyses taurocholate(out) + glutarate(in) = taurocholate(in) + glutarate(out). The catalysed reaction is dehydroepiandrosterone 3-sulfate(out) + glutarate(in) = dehydroepiandrosterone 3-sulfate(in) + glutarate(out). It catalyses the reaction glutarate(in) + 2-oxoglutarate(out) = glutarate(out) + 2-oxoglutarate(in). It carries out the reaction urate(in) + 2-oxoglutarate(out) = urate(out) + 2-oxoglutarate(in). The enzyme catalyses prostaglandin F2alpha(out) + glutarate(in) = prostaglandin F2alpha(in) + glutarate(out). The catalysed reaction is prostaglandin F2alpha(out) + 2-oxoglutarate(in) = prostaglandin F2alpha(in) + 2-oxoglutarate(out). It catalyses the reaction (R)-carnitine(out) + 2-oxoglutarate(in) = (R)-carnitine(in) + 2-oxoglutarate(out). It carries out the reaction glutarate(in) + (R)-carnitine(out) = glutarate(out) + (R)-carnitine(in). The enzyme catalyses prostaglandin E2(out) + 2-oxoglutarate(in) = prostaglandin E2(in) + 2-oxoglutarate(out). The catalysed reaction is prostaglandin E2(out) + glutarate(in) = prostaglandin E2(in) + glutarate(out). It catalyses the reaction urate(in) + glutarate(out) = urate(out) + glutarate(in). It carries out the reaction taurocholate(out) + 2-oxoglutarate(in) = taurocholate(in) + 2-oxoglutarate(out). The enzyme catalyses dehydroepiandrosterone 3-sulfate(out) + 2-oxoglutarate(in) = dehydroepiandrosterone 3-sulfate(in) + 2-oxoglutarate(out). The catalysed reaction is kynurenate(out) + a dicarboxylate(in) = kynurenate(in) + a dicarboxylate(out). It catalyses the reaction (indol-3-yl)acetate(out) + a dicarboxylate(in) = (indol-3-yl)acetate(in) + a dicarboxylate(out). It carries out the reaction indoxyl sulfate(out) + a dicarboxylate(in) = indoxyl sulfate(in) + a dicarboxylate(out). The enzyme catalyses N-benzoylglycine(out) + a dicarboxylate(in) = N-benzoylglycine(in) + a dicarboxylate(out). The catalysed reaction is 3-carboxy-4-methyl-5-propyl-2-furanpropanoate(out) + a dicarboxylate(in) = 3-carboxy-4-methyl-5-propyl-2-furanpropanoate(in) + a dicarboxylate(out). It catalyses the reaction (6R)-L-erythro-5,6,7,8-tetrahydrobiopterin(out) + a dicarboxylate(in) = (6R)-L-erythro-5,6,7,8-tetrahydrobiopterin(in) + a dicarboxylate(out). It carries out the reaction L-erythro-7,8-dihydrobiopterin(out) + a dicarboxylate(in) = L-erythro-7,8-dihydrobiopterin(in) + a dicarboxylate(out). The enzyme catalyses L-sepiapterin(out) + a dicarboxylate(in) = L-sepiapterin(in) + a dicarboxylate(out). Expression inhibited by androgens such as testosterone. Its function is as follows. Functions as an organic anion/dicarboxylate exchanger that couples organic anion uptake indirectly to the sodium gradient. Transports organic anions such as estrone 3-sulfate (E1S) and urate in exchange for dicarboxylates such as glutarate or ketoglutarate (2-oxoglutarate). Plays an important role in the excretion of endogenous and exogenous organic anions, especially from the kidney and the brain. E1S transport is pH- and chloride-dependent and may also involve E1S/cGMP exchange. Responsible for the transport of prostaglandin E2 (PGE2) and prostaglandin F2(alpha) (PGF2(alpha)) in the basolateral side of the renal tubule. Involved in the transport of neuroactive tryptophan metabolites kynurenate and xanthurenate. Functions as a biopterin transporters involved in the uptake and the secretion of coenzymes tetrahydrobiopterin (BH4), dihydrobiopterin (BH2) and sepiapterin to urine, thereby determining baseline levels of blood biopterins. May be involved in the basolateral transport of steviol, a metabolite of the popular sugar substitute stevioside. May participate in the detoxification/ renal excretion of drugs and xenobiotics, such as the histamine H(2)-receptor antagonists fexofenadine and cimetidine, the antibiotic benzylpenicillin (PCG), the anionic herbicide 2,4-dichloro-phenoxyacetate (2,4-D), the diagnostic agent p-aminohippurate (PAH), the antiviral acyclovir (ACV), and the mycotoxin ochratoxin (OTA), by transporting these exogenous organic anions across the cell membrane in exchange for dicarboxylates such as 2-oxoglutarate. May contribute to the release of cortisol in the adrenals. Involved in one of the detoxification systems on the choroid plexus (CP), removes substrates such as E1S or taurocholate (TC), PCG, 2,4-D and PAH, from the cerebrospinal fluid (CSF) to the blood for eventual excretion in urine and bile. Also contributes to the uptake of several other organic compounds such as the prostanoids prostaglandin E(2) and prostaglandin F(2-alpha), L-carnitine, and the therapeutic drugs allopurinol, 6-mercaptopurine (6-MP) and 5-fluorouracil (5-FU). Mediates the transport of PAH, PCG, and the statins pravastatin and pitavastatin, from the cerebrum into the blood circulation across the blood-brain barrier (BBB). Contributes to the renal uptake of potent uremic toxins (indoxyl sulfate (IS), indole acetate (IA), hippurate/N-benzoylglycine (HA) and 3-carboxy-4-methyl-5-propyl-2-furanpropionate (CMPF)), pravastatin, PCG, E1S and dehydroepiandrosterone sulfate (DHEAS), and is partly involved in the renal uptake of temocaprilat (an angiotensin-converting enzyme (ACE) inhibitor). In summary, plays a role in the efflux of drugs and xenobiotics, helping reduce their undesired toxicological effects on the body. This is Organic anion transporter 3 (Slc22a8) from Mus musculus (Mouse).